The primary structure comprises 228 residues: uncharacterized protein (228 aa).

Residues 7–228 (VEVHHLKKSV…LVNGQLQEEA (222 aa)) form the ABC transporter domain. 43 to 50 (GESGSGKS) is an ATP binding site.

The protein belongs to the ABC transporter superfamily.

This is an uncharacterized protein from Escherichia coli O157:H7.